The chain runs to 99 residues: Cell division protein FtsB (99 aa).

The Cytoplasmic portion of the chain corresponds to 1–3 (MKF). Residues 4 to 21 (FVIALIVLLGLLQYRLWS) traverse the membrane as a helical segment. At 22-99 (GSNSLPEYFV…GERSVSSPSQ (78 aa)) the chain is on the periplasmic side. A coiled-coil region spans residues 36–73 (IAVQQEGNDKLNERNQVLKEEIIDLKSGTEAIEERARN).

This sequence belongs to the FtsB family. In terms of assembly, part of a complex composed of FtsB, FtsL and FtsQ.

Its subcellular location is the cell inner membrane. Its function is as follows. Essential cell division protein. May link together the upstream cell division proteins, which are predominantly cytoplasmic, with the downstream cell division proteins, which are predominantly periplasmic. The chain is Cell division protein FtsB from Shewanella sp. (strain W3-18-1).